The sequence spans 1284 residues: Neuronal cell adhesion molecule (1284 aa).

Residues 1–24 form the signal peptide; the sequence is MMKEKSISASKASLVFFLCQMISA. Residues 25–1143 lie on the Extracellular side of the membrane; it reads LDVPLDSKLL…ASRQVDIATQ (1119 aa). 6 Ig-like C2-type domains span residues 41–129, 136–230, 243–332, 337–424, 430–517, and 521–608; these read PTIT…AAIS, PSRS…QPIS, PPVL…ISVT, PYWI…AFVN, PRIL…VQLE, and PTMI…AVLT. 2 cysteine pairs are disulfide-bonded: cysteine 63–cysteine 118 and cysteine 162–cysteine 213. A glycan (N-linked (GlcNAc...) asparagine) is linked at asparagine 78. N-linked (GlcNAc...) asparagine glycans are attached at residues asparagine 218 and asparagine 290. Intrachain disulfides connect cysteine 268/cysteine 316 and cysteine 358/cysteine 408. N-linked (GlcNAc...) asparagine glycans are attached at residues asparagine 409, asparagine 483, asparagine 576, asparagine 581, asparagine 595, and asparagine 692. 2 disulfide bridges follow: cysteine 452–cysteine 501 and cysteine 543–cysteine 592. Fibronectin type-III domains are found at residues 625-720, 725-819, 824-926, 930-1026, and 1040-1132; these read PPLD…TKSA, NPSN…SGED, APGN…TPEG, PPSF…IMDE, and QPLY…TGPA. The span at 707 to 731 shows a compositional bias: polar residues; the sequence is QPSEPSEQYLTKSANPDENPSNVQG. The disordered stretch occupies residues 707 to 732; the sequence is QPSEPSEQYLTKSANPDENPSNVQGI. N-linked (GlcNAc...) asparagine glycosylation is found at asparagine 778, asparagine 834, asparagine 885, asparagine 969, asparagine 985, asparagine 995, asparagine 1048, asparagine 1059, and asparagine 1091. A helical transmembrane segment spans residues 1144 to 1166; it reads GWFIGLMCAVALLILILLIVCFI. Topologically, residues 1167–1284 are cytoplasmic; the sequence is RRNKGGKYPV…SPVNAMNSFV (118 aa). Composition is skewed to basic and acidic residues over residues 1175-1195, 1202-1212, and 1221-1230; these read PVKEKEDAHADPEIQPMKEDD, RSLESDAEDHK, and PSDRTVKKED. Residues 1175 to 1284 form a disordered region; it reads PVKEKEDAHA…SPVNAMNSFV (110 aa). Polar residues predominate over residues 1268–1284; sequence NESSEAPSPVNAMNSFV.

The protein belongs to the immunoglobulin superfamily. L1/neurofascin/NgCAM family. As to quaternary structure, heterodimer of an alpha and a beta chain. In terms of tissue distribution, retina and developing brain.

The protein localises to the cell membrane. Functionally, this protein is a cell adhesion molecule involved in neuron-neuron adhesion, neurite fasciculation, outgrowth of neurites, etc. Specifically involved in the development of optic fibres in the retina. This is Neuronal cell adhesion molecule from Gallus gallus (Chicken).